Here is a 91-residue protein sequence, read N- to C-terminus: Putative defensin-like protein 221 (91 aa).

An N-terminal signal peptide occupies residues 1-19; that stretch reads MKTLFFFLTIAVLVSSCTS. Intrachain disulfides connect Cys-61–Cys-78, Cys-64–Cys-83, and Cys-68–Cys-85.

Belongs to the DEFL family.

It is found in the secreted. The polypeptide is Putative defensin-like protein 221 (Arabidopsis thaliana (Mouse-ear cress)).